A 381-amino-acid chain; its full sequence is Class E basic helix-loop-helix protein 22 (381 aa).

Disordered stretches follow at residues 30–94 (RLEA…GGGG), 135–154 (RGSVAESSGGEQSPDDDSDG), and 188–242 (HLHG…EQKA). Over residues 82 to 94 (GGGGGSAGSGGGG) the composition is skewed to gly residues. A compositionally biased stretch (gly residues) spans 198-225 (GGLGGGGGGGSSSGSSGGGGGSGSGSGG). The bHLH domain maps to 242–296 (ALRLNINARERRRMHDLNDALDELRAVIPYAHSPSVRKLSKIATLLLAKNYILMQ).

In terms of assembly, interacts with PRDM8. In terms of tissue distribution, brain-specific, with the highest expression in the cerebellum.

It localises to the nucleus. Inhibits DNA binding of TCF3/E47 homodimers and TCF3 (E47)/NEUROD1 heterodimers and acts as a strong repressor of Neurod1 and Myod-responsive genes, probably by heterodimerization with class a basic helix-loop-helix factors. Despite the presence of an intact basic domain, does not bind to DNA. In the brain, may function as an area-specific transcription factor that regulates the postmitotic acquisition of area identities and elucidate the genetic hierarchy between progenitors and postmitotic neurons driving neocortical arealization. May be required for the survival of a specific population of inhibitory neurons in the superficial laminae of the spinal cord dorsal horn that may regulate pruritis. Seems to play a crucial role in the retinogenesis, in the specification of amacrine and bipolar subtypes. Forms with PRDM8 a transcriptional repressor complex controlling genes involved in neural development and neuronal differentiation. The chain is Class E basic helix-loop-helix protein 22 (BHLHE22) from Homo sapiens (Human).